Consider the following 297-residue polypeptide: Inactive beta selinene synthase (297 aa).

Belongs to the terpene synthase family. In terms of assembly, monomer.

The protein localises to the cytoplasm. Functionally, inactive selinene synthase. This chain is Inactive beta selinene synthase, found in Zea mays (Maize).